The primary structure comprises 365 residues: Ribosomal RNA large subunit methyltransferase F (365 aa).

Low complexity-rich tracts occupy residues 1-18 (MPKP…SPAG) and 30-42 (AKLK…AASK). A disordered region spans residues 1–50 (MPKPAIKTAAKPATSPAGKRAKPNTPQSVAKLKASTAKAASKPKAKLGEK).

This sequence belongs to the methyltransferase superfamily. METTL16/RlmF family.

The protein localises to the cytoplasm. It catalyses the reaction adenosine(1618) in 23S rRNA + S-adenosyl-L-methionine = N(6)-methyladenosine(1618) in 23S rRNA + S-adenosyl-L-homocysteine + H(+). Specifically methylates the adenine in position 1618 of 23S rRNA. In Shewanella oneidensis (strain ATCC 700550 / JCM 31522 / CIP 106686 / LMG 19005 / NCIMB 14063 / MR-1), this protein is Ribosomal RNA large subunit methyltransferase F.